Reading from the N-terminus, the 469-residue chain is Actin-related protein 4 (469 aa).

A disordered region spans residues Pro-104–Thr-136. A compositionally biased stretch (acidic residues) spans Asp-119 to Thr-136.

This sequence belongs to the actin family. ARP4 subfamily. Component of the NuA4 histone acetyltransferase complex, of the INO80 chromatin remodeling complex, and of the SWR1 chromatin remodeling complex.

The protein resides in the nucleus. Its function is as follows. Chromatin interaction component of the NuA4 histone acetyltransferase complex which is involved in transcriptional activation of selected genes principally by acetylation of nucleosomal histone H4 and H2A. The NuA4 complex is also involved in DNA repair. Is required for NuA4 complex integrity. Component of the SWR1 complex which mediates the ATP-dependent exchange of histone H2A for the H2A variant H2A.Z leading to transcriptional regulation of selected genes by chromatin remodeling. Component of the INO80 complex which remodels chromatin by shifting nucleosomes and is involved in DNA repair. This Neurospora crassa (strain ATCC 24698 / 74-OR23-1A / CBS 708.71 / DSM 1257 / FGSC 987) protein is Actin-related protein 4 (arp-4).